We begin with the raw amino-acid sequence, 950 residues long: Nonsense-mediated mRNA decay factor SMG8 (950 aa).

2 disordered regions span residues 560–607 (HTGK…LSPT) and 624–651 (NESQ…ADTE). Residues 568-582 (QDEDGEEDAEDEEGQ) show a composition bias toward acidic residues. A compositionally biased stretch (polar residues) spans 593-607 (QNTASNGCSQPLSPT). A compositionally biased stretch (low complexity) spans 624 to 648 (NESQASSEQLSNSEQNSTSSGTSSA).

It belongs to the SMG8 family.

In terms of biological role, involved in nonsense-mediated decay (NMD) of mRNAs containing premature stop codons. Probable component of kinase complex containing nonC and recruited to stalled ribosomes. The sequence is that of Nonsense-mediated mRNA decay factor SMG8 from Drosophila yakuba (Fruit fly).